We begin with the raw amino-acid sequence, 313 residues long: Ribosomal RNA small subunit methyltransferase H (313 aa).

S-adenosyl-L-methionine is bound by residues 35–37 (GGH), D55, F79, D101, and Q108.

The protein belongs to the methyltransferase superfamily. RsmH family.

It is found in the cytoplasm. The enzyme catalyses cytidine(1402) in 16S rRNA + S-adenosyl-L-methionine = N(4)-methylcytidine(1402) in 16S rRNA + S-adenosyl-L-homocysteine + H(+). In terms of biological role, specifically methylates the N4 position of cytidine in position 1402 (C1402) of 16S rRNA. The sequence is that of Ribosomal RNA small subunit methyltransferase H from Shigella flexneri.